The sequence spans 566 residues: MKAKLLVLLCALSATDADTICIGYHANNSTDTVDTVLEKNVTVTHSVNLLEDNHNGKLCKLKGIAPLQLGKCSIAGWILGNPECESLFSKKSWSYIAETPNSENGTCYPGYFADYEELREQLSSVSSFERFEIFPKESSWPKHNVTKGVTAACSHKGKSSFYRNLLWLTEKNGSYPNLSKSYVNNKEKEVLVLWGVHHPSNIEDQKTIYRKENAYVSVVSSHYNRRFTPEIAKRPKVRNQEGRINYYWTLLEPGDTIIFEANGNLIAPWYAFALSRGFGSGIITSNASMDECDAKCQTPQGAINSSLPFQNVHPVTIGECPKYVRSTKLRMVTGLRNIPSIQSRGLFGAIAGFIEGGWTGMIDGWYGYHHQNEQGSGYAADQKSTQNAINGITNKVNSIIEKMNTQFTAVGKEFNKLEKRMENLNKKVDDGFLDIWTYNAELLVLLENERTLDFHDSNVKNLYEKVKSQLKNNAKEIGNGCFEFYHKCNNECMESVKNGTYDYPKYSEESKLNREKIDGVKLESMGVYQILAIYSTVASSLVLLVSLGAISFWMCSNGSLQCRICI.

A signal peptide spans 1 to 17 (MKAKLLVLLCALSATDA). Over 18–529 (DTICIGYHAN…VKLESMGVYQ (512 aa)) the chain is Extracellular. Cystine bridges form between C21–C481, C59–C292, C72–C84, C107–C153, C296–C320, and C488–C492. 3 N-linked (GlcNAc...) asparagine; by host glycosylation sites follow: N27, N28, and N40. N104, N144, N172, N177, N286, and N304 each carry an N-linked (GlcNAc...) asparagine; by host glycan. An N-linked (GlcNAc...) asparagine; by host glycan is attached at N498. A helical transmembrane segment spans residues 530–550 (ILAIYSTVASSLVLLVSLGAI). Residues 551–566 (SFWMCSNGSLQCRICI) are Cytoplasmic-facing. Residues C555, C562, and C565 are each lipidated (S-palmitoyl cysteine; by host).

Belongs to the influenza viruses hemagglutinin family. Homotrimer of disulfide-linked HA1-HA2. Interacts with human CACNA1C. In terms of processing, palmitoylated. In natural infection, inactive HA is matured into HA1 and HA2 outside the cell by one or more trypsin-like, arginine-specific endoprotease secreted by the bronchial epithelial cells. One identified protease that may be involved in this process is secreted in lungs by club cells.

It localises to the virion membrane. Its subcellular location is the host apical cell membrane. Binds to sialic acid-containing receptors on the cell surface, bringing about the attachment of the virus particle to the cell. This attachment induces virion internalization either through clathrin-dependent endocytosis or through clathrin- and caveolin-independent pathway. Plays a major role in the determination of host range restriction and virulence. Class I viral fusion protein. Responsible for penetration of the virus into the cell cytoplasm by mediating the fusion of the membrane of the endocytosed virus particle with the endosomal membrane. Low pH in endosomes induces an irreversible conformational change in HA2, releasing the fusion hydrophobic peptide. Several trimers are required to form a competent fusion pore. The chain is Hemagglutinin from Aves (Human).